We begin with the raw amino-acid sequence, 464 residues long: Argininosuccinate lyase (464 aa).

Belongs to the lyase 1 family. Argininosuccinate lyase subfamily.

It is found in the cytoplasm. The enzyme catalyses 2-(N(omega)-L-arginino)succinate = fumarate + L-arginine. The protein operates within amino-acid biosynthesis; L-arginine biosynthesis; L-arginine from L-ornithine and carbamoyl phosphate: step 3/3. This is Argininosuccinate lyase from Pseudomonas fluorescens (strain SBW25).